We begin with the raw amino-acid sequence, 196 residues long: Small ribosomal subunit protein uS4c (196 aa).

Residues 15–43 form a disordered region; that stretch reads LGALPGLTRKTPKSGSNQKKKFHSGKKEQ. Positions 89 to 150 constitute an S4 RNA-binding domain; sequence MRLDNILFRL…NQRSKRLVQN (62 aa).

The protein belongs to the universal ribosomal protein uS4 family. As to quaternary structure, part of the 30S ribosomal subunit. Contacts protein S5. The interaction surface between S4 and S5 is involved in control of translational fidelity.

The protein localises to the plastid. Its subcellular location is the chloroplast. Functionally, one of the primary rRNA binding proteins, it binds directly to 16S rRNA where it nucleates assembly of the body of the 30S subunit. With S5 and S12 plays an important role in translational accuracy. This is Small ribosomal subunit protein uS4c (rps4) from Bothriochloa ischaemum (Yellow bluestem).